The chain runs to 513 residues: Calcium-dependent protein kinase 2 (513 aa).

Gly-2 carries N-myristoyl glycine lipidation. The Protein kinase domain occupies 72-326 (YIIDEKLGQG…IEEALNHPWI (255 aa)). Residues 78-86 (LGQGTYGCV) and Lys-101 contribute to the ATP site. The Proton acceptor role is filled by Asp-192. Positions 345-353 (NLKNFKKEN) match the J domain autoinhibitory motif motif. The tract at residues 345–380 (NLKNFKKENELKKIALTIIAKHLCDVEINNLRNIFI) is j domain. The J domain EF-hand interaction motif motif lies at 354 to 363 (ELKKIALTII). EF-hand domains are found at residues 370 to 405 (VEIN…IGYQ), 406 to 441 (KIPP…KQTY), 442 to 477 (LKKE…DDIE), and 480 to 513 (LIDK…SKKK). Asp-383, Asp-385, Ser-387, Thr-389, and Glu-394 together coordinate Ca(2+). Residues Asp-455, Asp-457, Asn-459, Lys-461, Glu-466, Asp-493, Asn-495, Asp-497, Glu-499, and Glu-504 each coordinate Ca(2+).

Belongs to the protein kinase superfamily. Ser/Thr protein kinase family. CDPK subfamily. Monomer. Mg(2+) serves as cofactor. In terms of processing, myristoylated; myristoylation may target it to different subcellular compartments. Autophosphorylated in vitro.

It carries out the reaction L-seryl-[protein] + ATP = O-phospho-L-seryl-[protein] + ADP + H(+). It catalyses the reaction L-threonyl-[protein] + ATP = O-phospho-L-threonyl-[protein] + ADP + H(+). Its activity is regulated as follows. Activated by calcium. Upon calcium binding to the EF-hand domains, the C-terminus of the junction domain (J domain) undergoes a conformational change which results in the dissociation of the pseudo-substrate inhibitory motif from the catalytic domain. This, in turn, may facilitate the autophosphorylation of the activation loop at Thr-232, which leads to the kinase activation. In terms of biological role, calcium-dependent protein kinase which acts as a sensor and effector of intracellular Ca(2+) levels probably in part downstream of cGMP-activated PKG kinase. During male gametogenesis in the mosquito gut, required for male exflagellation, possibly by regulating male gamete exit from the host erythrocytes. Not required for asexual blood stage proliferation. The protein is Calcium-dependent protein kinase 2 of Plasmodium falciparum (isolate K1 / Thailand).